Consider the following 425-residue polypeptide: Dihydroorotase (425 aa).

The Zn(2+) site is built by His56 and His58. Residues 58 to 60 and Asn90 each bind substrate; that span reads HYR. 3 residues coordinate Zn(2+): Asp148, His175, and His228. Asn274 lines the substrate pocket. Residue Asp301 coordinates Zn(2+). Asp301 is a catalytic residue. Substrate is bound by residues His305 and 319–320; that span reads FG.

It belongs to the metallo-dependent hydrolases superfamily. DHOase family. Class I DHOase subfamily. Requires Zn(2+) as cofactor.

The catalysed reaction is (S)-dihydroorotate + H2O = N-carbamoyl-L-aspartate + H(+). The protein operates within pyrimidine metabolism; UMP biosynthesis via de novo pathway; (S)-dihydroorotate from bicarbonate: step 3/3. Functionally, catalyzes the reversible cyclization of carbamoyl aspartate to dihydroorotate. The polypeptide is Dihydroorotase (Lactobacillus johnsonii (strain CNCM I-12250 / La1 / NCC 533)).